A 620-amino-acid polypeptide reads, in one-letter code: Long-chain fatty acid transport protein 2 (620 aa).

Residues 1–4 (MLPV) lie on the Lumenal side of the membrane. The helical transmembrane segment at 5 to 27 (LYTGLAGLLLLPLLLTCCCPYLL) threads the bilayer. Topologically, residues 28-106 (QDVRFFLQLA…DHLGLRQGDC (79 aa)) are cytoplasmic. A helical membrane pass occupies residues 107 to 127 (VALFMGNEPAYVWLWLGLLKL). The Lumenal segment spans residues 128 to 267 (GCPMACLNYN…DVIYTTMPLY (140 aa)). 222-233 (YIYTSGTTGLPK) contributes to the AMP binding site. A helical transmembrane segment spans residues 268–288 (HSAALMIGLHGCIVVGATFAL). At 289 to 620 (RSKFSASQFW…NAIIDKTLKL (332 aa)) the chain is on the cytoplasmic side. The residue at position 291 (Lys291) is an N6-acetyllysine. The residue at position 577 (Thr577) is a Phosphothreonine.

The protein belongs to the ATP-dependent AMP-binding enzyme family. As to expression, liver and kidney (at protein level).

It is found in the endoplasmic reticulum membrane. The protein localises to the peroxisome membrane. Its subcellular location is the cell membrane. The protein resides in the microsome. It catalyses the reaction a fatty acid(in) = a fatty acid(out). The catalysed reaction is (9Z)-octadecenoate(out) = (9Z)-octadecenoate(in). The enzyme catalyses a long-chain fatty acid + ATP + CoA = a long-chain fatty acyl-CoA + AMP + diphosphate. It carries out the reaction (5Z,8Z,11Z,14Z)-eicosatetraenoate + ATP + CoA = (5Z,8Z,11Z,14Z)-eicosatetraenoyl-CoA + AMP + diphosphate. It catalyses the reaction (9Z,12Z,15Z)-octadecatrienoate + ATP + CoA = (9Z,12Z,15Z)-octadecatrienoyl-CoA + AMP + diphosphate. The catalysed reaction is hexadecanoate + ATP + CoA = hexadecanoyl-CoA + AMP + diphosphate. The enzyme catalyses (9Z)-octadecenoate + ATP + CoA = (9Z)-octadecenoyl-CoA + AMP + diphosphate. It carries out the reaction 2,6,10,14-tetramethylpentadecanoate + ATP + CoA = pristanoyl-CoA + AMP + diphosphate. It catalyses the reaction (E)-hexadec-2-enoate + ATP + CoA = (2E)-hexadecenoyl-CoA + AMP + diphosphate. The catalysed reaction is 3,7,11,15-tetramethylhexadecanoate + ATP + CoA = phytanoyl-CoA + AMP + diphosphate. The enzyme catalyses a very long-chain fatty acid + ATP + CoA = a very long-chain fatty acyl-CoA + AMP + diphosphate. It carries out the reaction tetracosanoate + ATP + CoA = tetracosanoyl-CoA + AMP + diphosphate. It catalyses the reaction (4Z,7Z,10Z,13Z,16Z,19Z)-docosahexaenoate + ATP + CoA = (4Z,7Z,10Z,13Z,16Z,19Z)-docosahexaenoyl-CoA + AMP + diphosphate. The catalysed reaction is (25R)-3alpha,7alpha,12alpha-trihydroxy-5beta-cholestan-26-oate + ATP + CoA = (25R)-3alpha,7alpha,12alpha-trihydroxy-5beta-cholestan-26-oyl-CoA + AMP + diphosphate. In terms of biological role, mediates the import of long-chain fatty acids (LCFA) into the cell by facilitating their transport across cell membranes, playing an important role in hepatic fatty acid uptake. Also functions as an acyl-CoA ligase catalyzing the ATP-dependent formation of fatty acyl-CoA using LCFA and very-long-chain fatty acids (VLCFA) as substrates, which prevents fatty acid efflux from cells and might drive more fatty acid uptake. Plays a pivotal role in regulating available LCFA substrates from exogenous sources in tissues undergoing high levels of beta-oxidation or triglyceride synthesis. Can also activate branched-chain fatty acids such as phytanic acid and pristanic acid. May contribute to the synthesis of sphingosine-1-phosphate. Does not activate C24 bile acids, cholate and chenodeoxycholate. In vitro, activates 3-alpha,7-alpha,12-alpha-trihydroxy-5-beta-cholestanate (THCA), the C27 precursor of cholic acid deriving from the de novo synthesis from cholesterol. However, it is not critical for THCA activation and bile synthesis in vivo. This chain is Long-chain fatty acid transport protein 2 (Slc27a2), found in Rattus norvegicus (Rat).